A 334-amino-acid polypeptide reads, in one-letter code: Chorismatase (334 aa).

Residues Y143, R150, Y203, and R216 each contribute to the substrate site. Residue E328 is the Proton acceptor of the active site.

The protein belongs to the FkbO/Hyg5 family. As to quaternary structure, monomer.

The enzyme catalyses chorismate + H2O = (3R,4R)-3,4-dihydroxy-3,4-dihydrobenzoate + pyruvate. Its function is as follows. Involved in the biosynthesis of the macrocyclic amino acid-linked polyketides rapamycin which is a potent immunosuppressant that prevents T-cell proliferation through initial binding to the immunophilin FKBP12. Catalyzes the hydrolysis of chorismate via a 1,4-conjugate elimination of water to yield (4R,5R)-4,5-dihydroxycyclohexa-1,5-dienecarboxylic acid (DCDC). The protein is Chorismatase (rapK) of Streptomyces rapamycinicus (strain ATCC 29253 / DSM 41530 / NRRL 5491 / AYB-994) (Streptomyces hygroscopicus (strain ATCC 29253)).